The chain runs to 89 residues: Small ribosomal subunit protein uS15 (89 aa).

The protein belongs to the universal ribosomal protein uS15 family. As to quaternary structure, part of the 30S ribosomal subunit. Forms a bridge to the 50S subunit in the 70S ribosome, contacting the 23S rRNA.

In terms of biological role, one of the primary rRNA binding proteins, it binds directly to 16S rRNA where it helps nucleate assembly of the platform of the 30S subunit by binding and bridging several RNA helices of the 16S rRNA. Its function is as follows. Forms an intersubunit bridge (bridge B4) with the 23S rRNA of the 50S subunit in the ribosome. In Nitrosomonas eutropha (strain DSM 101675 / C91 / Nm57), this protein is Small ribosomal subunit protein uS15.